Here is a 299-residue protein sequence, read N- to C-terminus: QSGTSGPYTACSELILPVTQCLGQKSAACHVEYNSVINESLPVPFPDCCPANSCCTCPSSSSRNLISGCQPSLSLQRPDLGDLLLGRDASLTCTLSGLKNPEDAVFTWEPTNGNEPVQQRAQRDLSGCYSVSSVLPSSAETWKARTEFTCTVTHPEIDSGSLTATISRGVVTPPQVHLLPPPSEELALNEQVTLTCLVRGFSPKDVLVSWRHQGQEVPEDSFLVWKSMPESSQDKATYAITSLLRVPAEDWNQGDTYSCMVGHEGLAEHFTQKTIDRLAGKPTHVNVSVVVADVEAVCY.

Ig-like domains are found at residues 71–167 and 174–276; these read PSLS…ATIS and PQVH…KTID.

In terms of biological role, ig alpha is the major immunoglobulin class in body secretions. It may serve both to defend against local infection and to prevent access of foreign antigens to the general immunologic system. The polypeptide is Ig alpha chain C region (Oryctolagus cuniculus (Rabbit)).